Here is a 278-residue protein sequence, read N- to C-terminus: Formamidopyrimidine-DNA glycosylase (278 aa).

The Schiff-base intermediate with DNA role is filled by proline 2. Glutamate 3 serves as the catalytic Proton donor. Catalysis depends on lysine 59, which acts as the Proton donor; for beta-elimination activity. Histidine 94, arginine 113, and lysine 154 together coordinate DNA. The FPG-type zinc finger occupies 239–273 (KVHTKKGEFCIKCSSKIEKIKFKGRGTYFCPTCQK). Arginine 263 functions as the Proton donor; for delta-elimination activity in the catalytic mechanism.

This sequence belongs to the FPG family. Monomer. Zn(2+) is required as a cofactor.

The enzyme catalyses Hydrolysis of DNA containing ring-opened 7-methylguanine residues, releasing 2,6-diamino-4-hydroxy-5-(N-methyl)formamidopyrimidine.. It catalyses the reaction 2'-deoxyribonucleotide-(2'-deoxyribose 5'-phosphate)-2'-deoxyribonucleotide-DNA = a 3'-end 2'-deoxyribonucleotide-(2,3-dehydro-2,3-deoxyribose 5'-phosphate)-DNA + a 5'-end 5'-phospho-2'-deoxyribonucleoside-DNA + H(+). Involved in base excision repair of DNA damaged by oxidation or by mutagenic agents. Acts as a DNA glycosylase that recognizes and removes damaged bases. Has a preference for oxidized purines, such as 7,8-dihydro-8-oxoguanine (8-oxoG). Has AP (apurinic/apyrimidinic) lyase activity and introduces nicks in the DNA strand. Cleaves the DNA backbone by beta-delta elimination to generate a single-strand break at the site of the removed base with both 3'- and 5'-phosphates. This is Formamidopyrimidine-DNA glycosylase (mutM) from Mycoplasmopsis pulmonis (strain UAB CTIP) (Mycoplasma pulmonis).